The following is a 404-amino-acid chain: Cysteine desulfurase IscS (404 aa).

Residues 75 to 76, Asn-155, Gln-183, and 203 to 205 each bind pyridoxal 5'-phosphate; these read AT and SGH. Lys-206 is modified (N6-(pyridoxal phosphate)lysine). Thr-243 provides a ligand contact to pyridoxal 5'-phosphate. Cys-328 acts as the Cysteine persulfide intermediate in catalysis. Position 328 (Cys-328) interacts with [2Fe-2S] cluster.

It belongs to the class-V pyridoxal-phosphate-dependent aminotransferase family. NifS/IscS subfamily. As to quaternary structure, homodimer. Forms a heterotetramer with IscU, interacts with other sulfur acceptors. It depends on pyridoxal 5'-phosphate as a cofactor.

It localises to the cytoplasm. The enzyme catalyses (sulfur carrier)-H + L-cysteine = (sulfur carrier)-SH + L-alanine. Its pathway is cofactor biosynthesis; iron-sulfur cluster biosynthesis. Functionally, master enzyme that delivers sulfur to a number of partners involved in Fe-S cluster assembly, tRNA modification or cofactor biosynthesis. Catalyzes the removal of elemental sulfur atoms from cysteine to produce alanine. Functions as a sulfur delivery protein for Fe-S cluster synthesis onto IscU, an Fe-S scaffold assembly protein, as well as other S acceptor proteins. This chain is Cysteine desulfurase IscS, found in Shewanella sp. (strain ANA-3).